We begin with the raw amino-acid sequence, 454 residues long: uncharacterized protein (454 aa).

Positions 364–405 constitute an HNH domain; sequence CSRPGCDAPAYHSEVHHVTPWTTTHRTDINDLTLACGPDNRL.

Belongs to the Rv1128c/1148c/1588c/1702c/1945/3466 family.

This is an uncharacterized protein from Mycobacterium tuberculosis (strain ATCC 25618 / H37Rv).